A 157-amino-acid chain; its full sequence is Small ribosomal subunit protein uS7 (157 aa).

Belongs to the universal ribosomal protein uS7 family. In terms of assembly, part of the 30S ribosomal subunit. Contacts proteins S9 and S11.

Functionally, one of the primary rRNA binding proteins, it binds directly to 16S rRNA where it nucleates assembly of the head domain of the 30S subunit. Is located at the subunit interface close to the decoding center, probably blocks exit of the E-site tRNA. In Pseudomonas fluorescens (strain Pf0-1), this protein is Small ribosomal subunit protein uS7.